The following is a 171-amino-acid chain: Dual specificity protein phosphatase OPG106 (171 aa).

This sequence belongs to the protein-tyrosine phosphatase family. Non-receptor class dual specificity subfamily. As to quaternary structure, homodimer.

Its subcellular location is the virion. The protein localises to the host cytoplasm. The enzyme catalyses O-phospho-L-tyrosyl-[protein] + H2O = L-tyrosyl-[protein] + phosphate. It catalyses the reaction O-phospho-L-seryl-[protein] + H2O = L-seryl-[protein] + phosphate. Functionally, serine/tyrosine phosphatase which down-regulates cellular antiviral response by dephosphorylating activated host STAT1 and blocking interferon (IFN)-stimulated innate immune responses. Dephosphorylates the OPG144 protein. The sequence is that of Dual specificity protein phosphatase OPG106 (OPG106) from Monkeypox virus.